The sequence spans 163 residues: Tail tube protein gp19 (163 aa).

This sequence belongs to the T4-like viruses Gp19 protein family.

The protein resides in the virion. In terms of biological role, structural component of the bacteriophage tail which consists of a contractile sheath, a tube and a baseplate. The central cylindrical segment of the tail consists of a rigid tube, composed of multiple copies of the tail tube protein. During infection, contraction of the sheath drives the central tube through the host outer membrane, creating a channel for DNA ejection from the capsid into the host cell. In Escherichia coli (Bacteriophage T6), this protein is Tail tube protein gp19 (19).